Here is a 292-residue protein sequence, read N- to C-terminus: Probable 2-(5''-triphosphoribosyl)-3'-dephosphocoenzyme-A synthase (292 aa).

It belongs to the CitG/MdcB family.

The enzyme catalyses 3'-dephospho-CoA + ATP = 2'-(5''-triphospho-alpha-D-ribosyl)-3'-dephospho-CoA + adenine. This chain is Probable 2-(5''-triphosphoribosyl)-3'-dephosphocoenzyme-A synthase, found in Shigella sonnei (strain Ss046).